The sequence spans 1093 residues: Protein transport protein Sec24A (1093 aa).

Disordered regions lie at residues 1-29, 60-168, 189-226, and 294-328; these read MSQPGIPASGGAPASLQAQNGAALASGSP, HPIP…TSLT, GPSVPPLVNPPLPTTFQPGAPHGPPPAGGPPPVRALTP, and SLPPGYQNTTPPGATGVPPSSLNYPSGPQAFTQTP. 2 stretches are compositionally biased toward polar residues: residues 112–126 and 138–168; these read ASQNPATTPMPSSSF and WQYNYPSTASQTNHCPRASSQPTVSGNTSLT. Pro residues-rich tracts occupy residues 191-201 and 209-221; these read SVPPLVNPPLP and PHGPPPAGGPPPV. Polar residues predominate over residues 299–328; it reads YQNTTPPGATGVPPSSLNYPSGPQAFTQTP. C431, C434, C452, and C455 together coordinate Zn(2+). The tract at residues 431-455 is zinc finger-like; that stretch reads CRSCRTYINPFVSFLDQRRWKCNLC. A Gelsolin-like repeat occupies 966-1038; it reads PQPPILQLSV…TPESARIIAF (73 aa).

The protein belongs to the SEC23/SEC24 family. SEC24 subfamily. As to quaternary structure, COPII is composed of at least five proteins: the Sec23/24 complex, the Sec13/31 complex and Sar1. Interacts with TMED2. Interacts (as part of the Sec23/24 complex) with SEC22B; recruits SEC22B into COPII-coated vesicles for its transport from the endoplasmic reticulum to the Golgi. Interacts with STING1; promoting STING1 translocation to COPII vesicles in a STEEP1-dependent manner. Interacts with TMEM39A. Interacts with SACM1L; this interaction is reduced in the absence of TMEM39A. Interacts with kinase FAM20C; transport of FAM20C from the endoplasmic reticulum to the Golgi is likely to be mediated by COPII vesicles.

It is found in the cytoplasmic vesicle. Its subcellular location is the COPII-coated vesicle membrane. The protein localises to the endoplasmic reticulum membrane. It localises to the cytoplasm. The protein resides in the cytosol. Component of the coat protein complex II (COPII) which promotes the formation of transport vesicles from the endoplasmic reticulum (ER). The coat has two main functions, the physical deformation of the endoplasmic reticulum membrane into vesicles and the selection of cargo molecules for their transport to the Golgi complex. Plays a central role in cargo selection within the COPII complex and together with SEC24B may have a different specificity compared to SEC24C and SEC24D. May package preferentially cargos with cytoplasmic DxE or LxxLE motifs and may also recognize conformational epitopes. In Homo sapiens (Human), this protein is Protein transport protein Sec24A.